A 208-amino-acid polypeptide reads, in one-letter code: Small ribosomal subunit protein uS4 (208 aa).

The S4 RNA-binding domain maps to 98–161; sequence RRLDNVIYRL…RKIPVLAEAQ (64 aa).

Belongs to the universal ribosomal protein uS4 family. As to quaternary structure, part of the 30S ribosomal subunit. Contacts protein S5. The interaction surface between S4 and S5 is involved in control of translational fidelity.

Functionally, one of the primary rRNA binding proteins, it binds directly to 16S rRNA where it nucleates assembly of the body of the 30S subunit. With S5 and S12 plays an important role in translational accuracy. This chain is Small ribosomal subunit protein uS4, found in Nitratidesulfovibrio vulgaris (strain ATCC 29579 / DSM 644 / CCUG 34227 / NCIMB 8303 / VKM B-1760 / Hildenborough) (Desulfovibrio vulgaris).